The chain runs to 332 residues: MCSQELWLENERKCAMVRKSKPSRKRQELLAIAFGVKVGLKGGFLWSPLKLFACSQISSLVRRAALTHNDNHFNYEKTHNFKVHTFRGPHWCEYCANFMWGLIAQGVRCSDCGLNVHKQCSKHVPNDCQPDLKRIKKVYCCDLTTLVKAHNTQRPMVVDICIREIEARGLKSEGLYRVSGFTEHIEDVKMAFDRDGEKADISANIYPDINIITGALKLYFRDLPIPIITYDTYSKFIEAAKISNADERLEAVHEVLMLLPPAHYETLRYLMIHLKKVTMNEKDNLMNAENLGIVFGPTLMRPPEDSTLTTLHDMRYQKLIVQILIENEDVLF.

The segment at 78–128 (THNFKVHTFRGPHWCEYCANFMWGLIAQGVRCSDCGLNVHKQCSKHVPNDC) adopts a Phorbol-ester/DAG-type zinc-finger fold. The 192-residue stretch at 141–332 (CDLTTLVKAH…ILIENEDVLF (192 aa)) folds into the Rho-GAP domain.

It localises to the membrane. Its activity is regulated as follows. In the inactive state, the N terminus protrudes into the active site of the Rho-GAP domain, sterically blocking Rac binding. Phospholipid binding to the Phorbol-ester/DAG-type zinc-finger/C1 domain triggers the cooperative dissociation of these interactions, allowing the N-terminus to move out of the active site and thereby activating the enzyme. GTPase-activating protein for p21-rac. This is Beta-chimaerin (Chn2) from Mus musculus (Mouse).